Here is a 638-residue protein sequence, read N- to C-terminus: MALSRGLPRELAEAVSGGRVLVVGAGGIGCELLKNLVLTGFSHIDLIDLDTIDVSNLNRQFLFQKKHVGRSKAQVAKESVLQFHPQANIEAHHDSIMNPDYNVEFFRQFILVMNALDNRAARNHVNRMCLAADVPLIESGTAGYLGQVTTIKKGVTECYECHPKPTQRTFPGCTIRNTPSEPIHCIVWAKYLFNQLFGEEDADQEVSPDRADPEAAWEPTEAEARARASNEDGDIKRISTKEWAKSTGYDPVKLFTKLFKDDIRYLLTMDKLWRKRKPPVPLDWAEVQSQGEANADQQNEPQLGLKDQQVLDVKSYASLFSKSIETLRVHLAEKGDGAELIWDKDDPPAMDFVTSAANLRMHIFSMNMKSRFDIKSMAGNIIPAIATTNAVIAGLIVLEGLKILSGKIDQCRTIFLNKQPNPRKKLLVPCALDPPNTNCYVCASKPEVTVRLNVHKVTVLTLQDKIVKEKFAMVAPDVQIEDGKGTILISSEEGETEANNPKKLSDFGIRNGSRLQADDFLQDYTLLINILHSEDLGKDVEFEVVGDSPEKVGPKQAEDAAKSIANGSDDGAQPSTSTAQEQDDVLIVDSDEEGPSNSTDCSGDDKARKRKLEENEAASTKKCRLEQMEDPDDVIALD.

ATP is bound by residues 24–29, Asp48, 56–59, Lys72, 95–96, and 117–122; these read GAGGIG, NLNR, SI, and DNRAAR. 2 residues coordinate Zn(2+): Cys158 and Cys161. Lys164 is covalently cross-linked (Glycyl lysine isopeptide (Lys-Gly) (interchain with G-Cter in SUMO1)). The active-site Glycyl thioester intermediate is Cys173. Lys190 participates in a covalent cross-link: Glycyl lysine isopeptide (Lys-Gly) (interchain with G-Cter in SUMO). The tract at residues 202 to 233 is disordered; it reads ADQEVSPDRADPEAAWEPTEAEARARASNEDG. Residue Ser207 is modified to Phosphoserine. The span at 222-233 shows a compositional bias: basic and acidic residues; sequence AEARARASNEDG. Residue Lys236 forms a Glycyl lysine isopeptide (Lys-Gly) (interchain with G-Cter in SUMO1); alternate linkage. Glycyl lysine isopeptide (Lys-Gly) (interchain with G-Cter in SUMO2); alternate cross-links involve residues Lys236 and Lys257. Glycyl lysine isopeptide (Lys-Gly) (interchain with G-Cter in SUMO); alternate cross-links involve residues Lys257 and Lys271. N6-acetyllysine; alternate is present on Lys271. Lys275 is covalently cross-linked (Glycyl lysine isopeptide (Lys-Gly) (interchain with G-Cter in SUMO)). A Glycyl lysine isopeptide (Lys-Gly) (interchain with G-Cter in SUMO2) cross-link involves residue Lys369. A Glycyl lysine isopeptide (Lys-Gly) (interchain with G-Cter in SUMO1); alternate cross-link involves residue Lys418. A Glycyl lysine isopeptide (Lys-Gly) (interchain with G-Cter in SUMO2); alternate cross-link involves residue Lys418. Positions 439 and 442 each coordinate Zn(2+). At Ser505 the chain carries Phosphoserine. Lys538 participates in a covalent cross-link: Glycyl lysine isopeptide (Lys-Gly) (interchain with G-Cter in SUMO2). 2 positions are modified to phosphoserine: Ser548 and Ser590. A compositionally biased stretch (basic and acidic residues) spans 548–561; it reads SPEKVGPKQAEDAA. Positions 548-638 are disordered; sequence SPEKVGPKQA…EDPDDVIALD (91 aa). A compositionally biased stretch (acidic residues) spans 581–594; the sequence is EQDDVLIVDSDEEG. Residues 603–614 show a composition bias toward basic and acidic residues; sequence GDDKARKRKLEE. Residue Lys609 forms a Glycyl lysine isopeptide (Lys-Gly) (interchain with G-Cter in SUMO) linkage. Lys611 participates in a covalent cross-link: Glycyl lysine isopeptide (Lys-Gly) (interchain with G-Cter in SUMO); alternate. Lys611 carries the post-translational modification N6-acetyllysine; alternate. Lys621 is covalently cross-linked (Glycyl lysine isopeptide (Lys-Gly) (interchain with G-Cter in SUMO)). Over residues 628-638 the composition is skewed to acidic residues; the sequence is MEDPDDVIALD.

The protein belongs to the ubiquitin-activating E1 family. In terms of assembly, heterodimer of SAE1 and UBA2/SAE2. The heterodimer corresponds to the two domains that are encoded on a single polypeptide chain in ubiquitin-activating enzyme E1. Interacts with UBE2I. Sumoylated with SUMO1 and SUMO2/3 and by UBC9. Sumoylation at Lys-236 inhibits enzymatic activity. Sumoylation at the C-terminal lysine cluster plays an essential role in nuclear trafficking. Broadly expressed, with highest levels in testis.

It localises to the cytoplasm. Its subcellular location is the nucleus. Its pathway is protein modification; protein sumoylation. Its function is as follows. The heterodimer acts as an E1 ligase for SUMO1, SUMO2, SUMO3, and probably SUMO4. It mediates ATP-dependent activation of SUMO proteins followed by formation of a thioester bond between a SUMO protein and a conserved active site cysteine residue on UBA2/SAE2. In Mus musculus (Mouse), this protein is SUMO-activating enzyme subunit 2 (Uba2).